Reading from the N-terminus, the 318-residue chain is tRNA-cytidine(32) 2-sulfurtransferase (318 aa).

A PP-loop motif motif is present at residues Ser52–Ser57. [4Fe-4S] cluster is bound by residues Cys127, Cys130, and Cys218.

Belongs to the TtcA family. In terms of assembly, homodimer. The cofactor is Mg(2+). Requires [4Fe-4S] cluster as cofactor.

It is found in the cytoplasm. The catalysed reaction is cytidine(32) in tRNA + S-sulfanyl-L-cysteinyl-[cysteine desulfurase] + AH2 + ATP = 2-thiocytidine(32) in tRNA + L-cysteinyl-[cysteine desulfurase] + A + AMP + diphosphate + H(+). It functions in the pathway tRNA modification. In terms of biological role, catalyzes the ATP-dependent 2-thiolation of cytidine in position 32 of tRNA, to form 2-thiocytidine (s(2)C32). The sulfur atoms are provided by the cysteine/cysteine desulfurase (IscS) system. In Actinobacillus pleuropneumoniae serotype 7 (strain AP76), this protein is tRNA-cytidine(32) 2-sulfurtransferase.